The primary structure comprises 62 residues: MILAFQLSVFALVAISFLLVVGVPVVLASPDGWSTSKNAVFSGASLWIALVFLVGVLNSFIS.

2 helical membrane-spanning segments follow: residues 8-28 and 41-61; these read SVFALVAISFLLVVGVPVVLA and FSGASLWIALVFLVGVLNSFI.

This sequence belongs to the PsbZ family. As to quaternary structure, PSII is composed of 1 copy each of membrane proteins PsbA, PsbB, PsbC, PsbD, PsbE, PsbF, PsbH, PsbI, PsbJ, PsbK, PsbL, PsbM, PsbT, PsbY, PsbZ, Psb30/Ycf12, at least 3 peripheral proteins of the oxygen-evolving complex and a large number of cofactors. It forms dimeric complexes.

Its subcellular location is the plastid. It localises to the chloroplast thylakoid membrane. In terms of biological role, may control the interaction of photosystem II (PSII) cores with the light-harvesting antenna, regulates electron flow through the 2 photosystem reaction centers. PSII is a light-driven water plastoquinone oxidoreductase, using light energy to abstract electrons from H(2)O, generating a proton gradient subsequently used for ATP formation. This Chaetosphaeridium globosum (Charophycean green alga) protein is Photosystem II reaction center protein Z.